Here is a 328-residue protein sequence, read N- to C-terminus: Serine protease 48 (328 aa).

An N-terminal signal peptide occupies residues 1-20 (MGPAGCAFTLLLLLGISVCG). The Peptidase S1 domain maps to 28-267 (VVGGQDAAAG…YQKWINATIS (240 aa)). An intrachain disulfide couples C53 to C69. Residues H68 and D114 each act as charge relay system in the active site. 3 disulfide bridges follow: C148/C226, C181/C205, and C216/C244. The Charge relay system role is filled by S220. The N-linked (GlcNAc...) asparagine glycan is linked to N263.

This sequence belongs to the peptidase S1 family.

It localises to the secreted. This Homo sapiens (Human) protein is Serine protease 48 (PRSS48).